We begin with the raw amino-acid sequence, 333 residues long: 1,5-anhydro-D-fructose reductase (333 aa).

NADP(+) is bound by residues 9–12 (ASTI), 33–34 (ST), Arg38, 71–76 (TTNELH), 93–94 (EK), Asn120, 162–163 (WR), and Tyr283.

As to quaternary structure, monomer.

It catalyses the reaction 1,5-anhydro-D-mannitol + NADP(+) = 1,5-anhydro-D-fructose + NADPH + H(+). Its function is as follows. Catalyzes the NADPH-specific reduction of 1,5-anhydro-D-fructose to 1,5-anhydro-D-mannitol. Also shows some activity against structurally related compounds such as 3-keto-1,5-anhydro-D-fructose, D-glucosone and D-xylosone. The enzyme cannot use NADH as cosubstrate. The sequence is that of 1,5-anhydro-D-fructose reductase (afr) from Ensifer adhaerens (Sinorhizobium morelense).